Consider the following 429-residue polypeptide: 3-phosphoshikimate 1-carboxyvinyltransferase (429 aa).

3-phosphoshikimate is bound by residues K23, S24, and R28. Phosphoenolpyruvate is bound at residue K23. Phosphoenolpyruvate is bound by residues G95 and R123. 3-phosphoshikimate contacts are provided by S168, Q170, D316, and K343. Q170 serves as a coordination point for phosphoenolpyruvate. Catalysis depends on D316, which acts as the Proton acceptor. Phosphoenolpyruvate is bound by residues R347 and R389.

It belongs to the EPSP synthase family. In terms of assembly, monomer.

Its subcellular location is the cytoplasm. The catalysed reaction is 3-phosphoshikimate + phosphoenolpyruvate = 5-O-(1-carboxyvinyl)-3-phosphoshikimate + phosphate. It functions in the pathway metabolic intermediate biosynthesis; chorismate biosynthesis; chorismate from D-erythrose 4-phosphate and phosphoenolpyruvate: step 6/7. Functionally, catalyzes the transfer of the enolpyruvyl moiety of phosphoenolpyruvate (PEP) to the 5-hydroxyl of shikimate-3-phosphate (S3P) to produce enolpyruvyl shikimate-3-phosphate and inorganic phosphate. The polypeptide is 3-phosphoshikimate 1-carboxyvinyltransferase (Bacillus thuringiensis (strain Al Hakam)).